A 149-amino-acid chain; its full sequence is MPVNPELQGRVLPAAAPYLVGREKVREFARAVGATHPVHLDPEAARAAGHADVVAPSTFPVVLQAMTVTQLLAEPDTGIDYSRVVHGEQAFTYTRPVVAGDELTATLTVTKVATLGGNAMVTAESAMVDGSGAHVVTAVSTLVVRGDDA.

The region spanning 16–117 (APYLVGREKV…TVTKVATLGG (102 aa)) is the MaoC-like domain.

This sequence belongs to the UPF0336 family.

This chain is UPF0336 protein CMM_2793, found in Clavibacter michiganensis subsp. michiganensis (strain NCPPB 382).